A 447-amino-acid chain; its full sequence is NADH peroxidase (447 aa).

Residues 7-11 (GSSHG), glutamate 32, cysteine 42, 110-113 (SPGA), and arginine 132 each bind FAD. Histidine 10 functions as the Proton acceptor in the catalytic mechanism. Cysteine 42 serves as the catalytic Redox-active. Residue cysteine 42 is modified to Cysteine sulfenic acid (-SOH). Residues isoleucine 160, aspartate 179, tyrosine 188, and glycine 243 each coordinate NAD(+). Aspartate 281 contacts FAD. Alanine 297 contacts NAD(+). Alanine 299 provides a ligand contact to FAD. Position 328 (glycine 328) interacts with NAD(+).

This sequence belongs to the class-III pyridine nucleotide-disulfide oxidoreductase family. In terms of assembly, homotetramer. The cofactor is FAD.

The enzyme catalyses H2O2 + NADH + H(+) = NAD(+) + 2 H2O. Peroxidase whose active site is a redox-active cysteine-sulfenic acid. The sequence is that of NADH peroxidase (npr) from Enterococcus faecalis (strain ATCC 700802 / V583).